Reading from the N-terminus, the 121-residue chain is Small ribosomal subunit protein uS13 (121 aa).

The disordered stretch occupies residues Leu-95 to Lys-121.

The protein belongs to the universal ribosomal protein uS13 family. In terms of assembly, part of the 30S ribosomal subunit. Forms a loose heterodimer with protein S19. Forms two bridges to the 50S subunit in the 70S ribosome.

In terms of biological role, located at the top of the head of the 30S subunit, it contacts several helices of the 16S rRNA. In the 70S ribosome it contacts the 23S rRNA (bridge B1a) and protein L5 of the 50S subunit (bridge B1b), connecting the 2 subunits; these bridges are implicated in subunit movement. Contacts the tRNAs in the A and P-sites. The polypeptide is Small ribosomal subunit protein uS13 (Polaromonas naphthalenivorans (strain CJ2)).